The primary structure comprises 96 residues: Small ribosomal subunit protein bS6 (96 aa).

It belongs to the bacterial ribosomal protein bS6 family.

Functionally, binds together with bS18 to 16S ribosomal RNA. The polypeptide is Small ribosomal subunit protein bS6 (rpsF) (Streptomyces coelicolor (strain ATCC BAA-471 / A3(2) / M145)).